Reading from the N-terminus, the 276-residue chain is Probable endonuclease 4 (276 aa).

Positions 70, 108, 143, 176, 179, 210, 223, 225, and 255 each coordinate Zn(2+).

The protein belongs to the AP endonuclease 2 family. It depends on Zn(2+) as a cofactor.

It carries out the reaction Endonucleolytic cleavage to 5'-phosphooligonucleotide end-products.. Endonuclease IV plays a role in DNA repair. It cleaves phosphodiester bonds at apurinic or apyrimidinic (AP) sites, generating a 3'-hydroxyl group and a 5'-terminal sugar phosphate. This Mesomycoplasma hyopneumoniae (strain J / ATCC 25934 / NCTC 10110) (Mycoplasma hyopneumoniae) protein is Probable endonuclease 4.